The primary structure comprises 81 residues: Neuronatin (81 aa).

Belongs to the neuronatin family.

May participate in the maintenance of segment identity in the hindbrain and pituitary development, and maturation or maintenance of the overall structure of the nervous system. May function as a regulatory subunit of ion channels. This is Neuronatin (NNAT) from Homo sapiens (Human).